The sequence spans 269 residues: Formamidopyrimidine-DNA glycosylase (269 aa).

Pro-2 functions as the Schiff-base intermediate with DNA in the catalytic mechanism. Residue Glu-3 is the Proton donor of the active site. Catalysis depends on Lys-57, which acts as the Proton donor; for beta-elimination activity. DNA contacts are provided by His-90, Arg-109, and Lys-150. The FPG-type zinc-finger motif lies at 235-269; sequence QVYGRKGEPCRVCGTPIVATKHAQRATFYCRQCQK. The Proton donor; for delta-elimination activity role is filled by Arg-259.

The protein belongs to the FPG family. As to quaternary structure, monomer. Zn(2+) serves as cofactor.

It catalyses the reaction Hydrolysis of DNA containing ring-opened 7-methylguanine residues, releasing 2,6-diamino-4-hydroxy-5-(N-methyl)formamidopyrimidine.. It carries out the reaction 2'-deoxyribonucleotide-(2'-deoxyribose 5'-phosphate)-2'-deoxyribonucleotide-DNA = a 3'-end 2'-deoxyribonucleotide-(2,3-dehydro-2,3-deoxyribose 5'-phosphate)-DNA + a 5'-end 5'-phospho-2'-deoxyribonucleoside-DNA + H(+). Its function is as follows. Involved in base excision repair of DNA damaged by oxidation or by mutagenic agents. Acts as a DNA glycosylase that recognizes and removes damaged bases. Has a preference for oxidized purines, such as 7,8-dihydro-8-oxoguanine (8-oxoG). Has AP (apurinic/apyrimidinic) lyase activity and introduces nicks in the DNA strand. Cleaves the DNA backbone by beta-delta elimination to generate a single-strand break at the site of the removed base with both 3'- and 5'-phosphates. This is Formamidopyrimidine-DNA glycosylase from Escherichia coli O7:K1 (strain IAI39 / ExPEC).